A 161-amino-acid chain; its full sequence is 2-C-methyl-D-erythritol 2,4-cyclodiphosphate synthase (161 aa).

Residues Asp-9 and His-11 each coordinate a divalent metal cation. 4-CDP-2-C-methyl-D-erythritol 2-phosphate contacts are provided by residues Asp-9–His-11 and His-37–Ser-38. His-45 is a binding site for a divalent metal cation. 4-CDP-2-C-methyl-D-erythritol 2-phosphate contacts are provided by residues Asp-59–Gly-61, Phe-64–Asp-68, Thr-135–Glu-138, and Arg-145.

It belongs to the IspF family. As to quaternary structure, homotrimer. Requires a divalent metal cation as cofactor.

It carries out the reaction 4-CDP-2-C-methyl-D-erythritol 2-phosphate = 2-C-methyl-D-erythritol 2,4-cyclic diphosphate + CMP. It functions in the pathway isoprenoid biosynthesis; isopentenyl diphosphate biosynthesis via DXP pathway; isopentenyl diphosphate from 1-deoxy-D-xylulose 5-phosphate: step 4/6. Its function is as follows. Involved in the biosynthesis of isopentenyl diphosphate (IPP) and dimethylallyl diphosphate (DMAPP), two major building blocks of isoprenoid compounds. Catalyzes the conversion of 4-diphosphocytidyl-2-C-methyl-D-erythritol 2-phosphate (CDP-ME2P) to 2-C-methyl-D-erythritol 2,4-cyclodiphosphate (ME-CPP) with a corresponding release of cytidine 5-monophosphate (CMP). The polypeptide is 2-C-methyl-D-erythritol 2,4-cyclodiphosphate synthase (Leptospira interrogans serogroup Icterohaemorrhagiae serovar copenhageni (strain Fiocruz L1-130)).